Reading from the N-terminus, the 139-residue chain is Large ribosomal subunit protein uL16 (139 aa).

Over residues 1–13 the composition is skewed to basic residues; the sequence is MLQPARRKYRKEQ. Residues 1–23 are disordered; that stretch reads MLQPARRKYRKEQKGRNTGISHS.

It belongs to the universal ribosomal protein uL16 family. In terms of assembly, part of the 50S ribosomal subunit.

Its function is as follows. Binds 23S rRNA and is also seen to make contacts with the A and possibly P site tRNAs. The sequence is that of Large ribosomal subunit protein uL16 from Herminiimonas arsenicoxydans.